The primary structure comprises 204 residues: Putative 3-methyladenine DNA glycosylase (204 aa).

Belongs to the DNA glycosylase MPG family.

This chain is Putative 3-methyladenine DNA glycosylase, found in Bacillus cytotoxicus (strain DSM 22905 / CIP 110041 / 391-98 / NVH 391-98).